Reading from the N-terminus, the 231-residue chain is Succinate dehydrogenase subunit 5, mitochondrial (231 aa).

The transit peptide at Met-1–Phe-63 directs the protein to the mitochondrion.

In terms of assembly, component of complex II composed of eight subunits in plants: four classical SDH subunits SDH1, SDH2, SDH3 and SDH4 (a flavoprotein (FP), an iron-sulfur protein (IP), and a cytochrome b composed of a large and a small subunit.), as well as four subunits unknown in mitochondria from bacteria and heterotrophic eukaryotes.

It is found in the mitochondrion inner membrane. It participates in carbohydrate metabolism; tricarboxylic acid cycle. This Oryza sativa subsp. japonica (Rice) protein is Succinate dehydrogenase subunit 5, mitochondrial.